A 287-amino-acid polypeptide reads, in one-letter code: Ribosomal RNA small subunit methyltransferase I (287 aa).

It belongs to the methyltransferase superfamily. RsmI family.

The protein resides in the cytoplasm. The enzyme catalyses cytidine(1402) in 16S rRNA + S-adenosyl-L-methionine = 2'-O-methylcytidine(1402) in 16S rRNA + S-adenosyl-L-homocysteine + H(+). Catalyzes the 2'-O-methylation of the ribose of cytidine 1402 (C1402) in 16S rRNA. In Streptococcus pyogenes serotype M18 (strain MGAS8232), this protein is Ribosomal RNA small subunit methyltransferase I.